The chain runs to 296 residues: ADP-forming sulfoacetate-CoA ligase subunit SqwL (296 aa).

CoA is bound by residues 17–20 (TGSE), K43, and 96–98 (IAD). Residue H251 is the Tele-phosphohistidine intermediate of the active site.

The protein belongs to the succinate/malate CoA ligase alpha subunit family. As to quaternary structure, forms a complex with SqwK.

It carries out the reaction sulfoacetate + ATP + CoA = sulfoacetyl-CoA + ADP + phosphate. In terms of biological role, part of a variant of the sulfo-TK pathway, a D-sulfoquinovose degradation pathway that produces sulfoacetate. Hydrolyzes sulfoacetyl-coenzyme A (sulfoacetyl-CoA) to produce sulfoacetate and CoA coupled with the phosphorylation of ADP to generate ATP. Cannot use succinate, acetate or 3-hydroxypropionate, and shows only residual activities with malonate and 3-sulfopropanoate. In Acholeplasma sp, this protein is ADP-forming sulfoacetate-CoA ligase subunit SqwL.